A 557-amino-acid chain; its full sequence is Copine-6 (557 aa).

C2 domains are found at residues 1-127 and 134-263; these read MSDP…TKPL and TAGK…MQWD. Positions 167, 173, 229, 231, and 237 each coordinate Ca(2+). The segment at 244-303 is linker region; it reads STFQEMQEGTANPGQEMQWDCINPKYRDKKKNYKSSGTVVLAQCTVEKVHTFLDYIMGGC. One can recognise a VWFA domain in the interval 306–526; that stretch reads SFTVAIDFTA…ALAKCVLAEV (221 aa).

Belongs to the copine family. Interacts (via second C2 domain) with OS9 (via C-terminus); this interaction occurs in a calcium-dependent manner in vitro. May interact with NECAB1. It depends on Ca(2+) as a cofactor. In terms of tissue distribution, expressed in the brain. Expressed in pyramidal cells, granule cells, and neurons in the dentate gyrus of the hippocampus and in granule cells of the olfactory bulb (at protein level). Expressed in pyramidal cells of the CA1-CA3 regions, in granule cells of the dentate gyrus, in granule cells of the olfactory bulbs, in the mitral cell layer and in neurons of the cerebral cortex layer II, brainstem and spinal cord. Not detected in glial cells.

Its subcellular location is the cytoplasm. The protein resides in the cell membrane. It is found in the endosome. The protein localises to the cytoplasmic vesicle. It localises to the clathrin-coated vesicle. Its subcellular location is the perikaryon. The protein resides in the cell projection. It is found in the dendrite. Functionally, calcium-dependent phospholipid-binding protein that plays a role in calcium-mediated intracellular processes. Binds phospholipid membranes in a calcium-dependent manner. Plays a role in dendrite formation by melanocytes. The protein is Copine-6 of Mus musculus (Mouse).